The primary structure comprises 413 residues: Dual-specificity RNA methyltransferase RlmN (413 aa).

The active-site Proton acceptor is the E126. Positions 132–381 (EEGRGTLCIS…IRTPRGRDIL (250 aa)) constitute a Radical SAM core domain. The cysteines at positions 139 and 384 are disulfide-linked. [4Fe-4S] cluster contacts are provided by C146, C150, and C153. S-adenosyl-L-methionine contacts are provided by residues 210–211 (GE), S242, 264–266 (SLH), and N341. The S-methylcysteine intermediate role is filled by C384.

The protein belongs to the radical SAM superfamily. RlmN family. [4Fe-4S] cluster is required as a cofactor.

It localises to the cytoplasm. It catalyses the reaction adenosine(2503) in 23S rRNA + 2 reduced [2Fe-2S]-[ferredoxin] + 2 S-adenosyl-L-methionine = 2-methyladenosine(2503) in 23S rRNA + 5'-deoxyadenosine + L-methionine + 2 oxidized [2Fe-2S]-[ferredoxin] + S-adenosyl-L-homocysteine. It carries out the reaction adenosine(37) in tRNA + 2 reduced [2Fe-2S]-[ferredoxin] + 2 S-adenosyl-L-methionine = 2-methyladenosine(37) in tRNA + 5'-deoxyadenosine + L-methionine + 2 oxidized [2Fe-2S]-[ferredoxin] + S-adenosyl-L-homocysteine. Its function is as follows. Specifically methylates position 2 of adenine 2503 in 23S rRNA and position 2 of adenine 37 in tRNAs. m2A2503 modification seems to play a crucial role in the proofreading step occurring at the peptidyl transferase center and thus would serve to optimize ribosomal fidelity. This Sinorhizobium medicae (strain WSM419) (Ensifer medicae) protein is Dual-specificity RNA methyltransferase RlmN.